Consider the following 37-residue polypeptide: Large ribosomal subunit protein bL36 (37 aa).

It belongs to the bacterial ribosomal protein bL36 family.

This is Large ribosomal subunit protein bL36 from Marinobacter nauticus (strain ATCC 700491 / DSM 11845 / VT8) (Marinobacter aquaeolei).